The sequence spans 281 residues: Probable protein phosphatase 2C 9 (281 aa).

A PPM-type phosphatase domain is found at 33-280; the sequence is KYGFSLVKGK…DDISCVVVRF (248 aa). Mn(2+) is bound by residues Asp-70, Gly-71, Asp-232, and Asp-271.

It belongs to the PP2C family. Interacts with phytochromes (via N-terminus). The cofactor is Mg(2+). Mn(2+) is required as a cofactor.

The protein localises to the nucleus. The catalysed reaction is O-phospho-L-seryl-[protein] + H2O = L-seryl-[protein] + phosphate. It catalyses the reaction O-phospho-L-threonyl-[protein] + H2O = L-threonyl-[protein] + phosphate. Its function is as follows. Involved in the regulation of phytochrome signaling. May regulate phytochrome-interacting factor 3 (PIF3) through the dephosphorylation of phytochrome. The protein is Probable protein phosphatase 2C 9 of Arabidopsis thaliana (Mouse-ear cress).